Here is a 249-residue protein sequence, read N- to C-terminus: Metal-staphylopine import system ATP-binding protein CntF (249 aa).

One can recognise an ABC transporter domain in the interval 2-244 (IKIKDVEKSY…DNAYTRELIE (243 aa)). 42–49 (GESGSGKS) is an ATP binding site.

This sequence belongs to the ABC transporter superfamily. As to quaternary structure, the complex is composed of two ATP-binding proteins (CntD and CntF), two transmembrane proteins (CntB and CntC) and a solute-binding protein (CntA).

It is found in the cell membrane. Its activity is regulated as follows. Nickel/cobalt import is reduced in the presence of zinc. In terms of biological role, part of the ABC transporter complex CntABCDF (Opp1) involved in the uptake of metal in complex with the metallophore staphylopine (StP). Involved in the import of divalent metals ions such as nickel, cobalt and zinc. Probably responsible for energy coupling to the transport system. Plays a major role in nickel/cobalt import in zinc-depleted conditions. Contributes to virulence. Required for full urease activity in vitro. The protein is Metal-staphylopine import system ATP-binding protein CntF of Staphylococcus aureus (strain NCTC 8325 / PS 47).